The chain runs to 131 residues: uncharacterized protein (131 aa).

The next 2 helical transmembrane spans lie at 52–72 (LIMI…FYLV) and 97–117 (SDII…YDVG).

The protein localises to the membrane. This is an uncharacterized protein from Acanthamoeba polyphaga mimivirus (APMV).